The following is a 634-amino-acid chain: CRISPR-associated protein MJ1674 (634 aa).

Functionally, CRISPR (clustered regularly interspaced short palindromic repeat) is an adaptive immune system that provides protection against mobile genetic elements (viruses, transposable elements and conjugative plasmids). CRISPR clusters contain spacers, sequences complementary to antecedent mobile elements, and target invading nucleic acids. CRISPR clusters are transcribed and processed into CRISPR RNA (crRNA). The type III Csm effector complex binds crRNA and acts as a crRNA-guided RNase, DNase and cyclic oligoadenylate synthase; binding of target RNA cognate to the crRNA is required for all activities. The polypeptide is CRISPR-associated protein MJ1674 (Methanocaldococcus jannaschii (strain ATCC 43067 / DSM 2661 / JAL-1 / JCM 10045 / NBRC 100440) (Methanococcus jannaschii)).